Consider the following 159-residue polypeptide: Bacterioferritin (159 aa).

In terms of domain architecture, Ferritin-like diiron spans 1–145; sequence MQGDPEVLRL…TQLELMDKLG (145 aa). Position 51 (glutamate 51) interacts with Fe cation. Position 52 (methionine 52) interacts with heme b. The Fe cation site is built by histidine 54, glutamate 94, glutamate 127, and histidine 130.

The protein belongs to the bacterioferritin family. Homooligomer of 24 subunits, arranged as 12 dimers, that are packed together to form an approximately spherical molecule with a central cavity, in which large amounts of iron can be deposited. Heme b is required as a cofactor.

The enzyme catalyses 4 Fe(2+) + O2 + 4 H(+) = 4 Fe(3+) + 2 H2O. It catalyses the reaction Fe(2+)(in) = Fe(2+)(out). Functionally, iron-storage protein, whose ferroxidase center binds Fe(2+), oxidizes it using dioxygen to Fe(3+), and participates in the subsequent Fe(3+) oxide mineral core formation within the central cavity of the BFR protein shell. This Mycobacterium avium protein is Bacterioferritin (bfr).